The primary structure comprises 367 residues: 3-dehydroquinate synthase (367 aa).

NAD(+) contacts are provided by residues 108–112 (GVIGD), 132–133 (TT), K145, and K154. Positions 187, 249, and 267 each coordinate Zn(2+).

The protein belongs to the sugar phosphate cyclases superfamily. Dehydroquinate synthase family. Requires Co(2+) as cofactor. Zn(2+) is required as a cofactor. The cofactor is NAD(+).

It is found in the cytoplasm. The catalysed reaction is 7-phospho-2-dehydro-3-deoxy-D-arabino-heptonate = 3-dehydroquinate + phosphate. It functions in the pathway metabolic intermediate biosynthesis; chorismate biosynthesis; chorismate from D-erythrose 4-phosphate and phosphoenolpyruvate: step 2/7. In terms of biological role, catalyzes the conversion of 3-deoxy-D-arabino-heptulosonate 7-phosphate (DAHP) to dehydroquinate (DHQ). This Paracoccus denitrificans (strain Pd 1222) protein is 3-dehydroquinate synthase.